The chain runs to 185 residues: Ribosome-recycling factor (185 aa).

A compositionally biased stretch (basic and acidic residues) spans 138-179 (TLKRQEKNGDITEDEQRSLEKQVQKVTDDATKEIDKLADQKS). The interval 138-185 (TLKRQEKNGDITEDEQRSLEKQVQKVTDDATKEIDKLADQKSQEITQG) is disordered.

The protein belongs to the RRF family.

The protein resides in the cytoplasm. Responsible for the release of ribosomes from messenger RNA at the termination of protein biosynthesis. May increase the efficiency of translation by recycling ribosomes from one round of translation to another. This chain is Ribosome-recycling factor, found in Lactobacillus gasseri (strain ATCC 33323 / DSM 20243 / BCRC 14619 / CIP 102991 / JCM 1131 / KCTC 3163 / NCIMB 11718 / NCTC 13722 / AM63).